A 325-amino-acid chain; its full sequence is Flotillin-like protein FloA (325 aa).

Helical transmembrane passes span 4–24 and 26–46; these read LGIVFLAAVVLLFVFLFFSFI and VGLWISAWAAGVRVPLLTLVA.

This sequence belongs to the flotillin-like FloA family. In terms of assembly, homooligomerizes.

It localises to the cell membrane. The protein localises to the membrane raft. Found in functional membrane microdomains (FMM) that may be equivalent to eukaryotic membrane rafts. FMMs are highly dynamic and increase in number as cells age. Flotillins are thought to be important factors in membrane fluidity. The polypeptide is Flotillin-like protein FloA (Thermus thermophilus (strain ATCC BAA-163 / DSM 7039 / HB27)).